We begin with the raw amino-acid sequence, 423 residues long: Galactosylceramide sulfotransferase (423 aa).

Topologically, residues 1–12 (MTLLPKKPCKSK) are cytoplasmic. A helical; Signal-anchor for type II membrane protein transmembrane segment spans residues 13 to 35 (AKGLLLGALFTSFLLLLYSYVVP). The Lumenal portion of the chain corresponds to 36 to 423 (PLYPNMAFTT…WKFLRDFLRW (388 aa)). Asn-66 and Asn-312 each carry an N-linked (GlcNAc...) asparagine glycan.

The protein belongs to the galactose-3-O-sulfotransferase family. In terms of tissue distribution, expressed in brain, testis, kidney, stomach, small intestine, liver, and lung. Not detected in heart, skeletal muscle, and spleen.

Its subcellular location is the golgi apparatus membrane. It carries out the reaction a beta-D-galactosyl-(1&lt;-&gt;1')-N-acylsphing-4-enine + 3'-phosphoadenylyl sulfate = an N-acyl-1-beta-D-(3-O-sulfo)-galactosyl-sphing-4-enine + adenosine 3',5'-bisphosphate + H(+). The enzyme catalyses a 1-O-alkyl-2-acyl-3-O-(beta-D-galactosyl)-sn-glycerol + 3'-phosphoadenylyl sulfate = a 1-O-alkyl-2-acyl-3-(beta-D-3-sulfogalactosyl)-sn-glycerol + adenosine 3',5'-bisphosphate + H(+). The catalysed reaction is a beta-D-Gal-(1&lt;-&gt;1')-ceramide + 3'-phosphoadenylyl sulfate = 1-(3-O-sulfo-beta-D-galactosyl)-ceramide + adenosine 3',5'-bisphosphate + H(+). It catalyses the reaction a 1,2-diacyl-3-O-(beta-D-galactosyl)-sn-glycerol + 3'-phosphoadenylyl sulfate = 1,2-diacyl-3-(3-O-sulfo-beta-D-galactosyl)-sn-glycerol + adenosine 3',5'-bisphosphate + H(+). It carries out the reaction a beta-D-Gal-(1-&gt;4)-beta-D-Glc-(1&lt;-&gt;1)-Cer(d18:1(4E)) + 3'-phosphoadenylyl sulfate = beta-D-3-sulfogalactosyl-(1-&gt;4)-beta-D-glucosyl-(1&lt;-&gt;1')-N-acylsphing-4-enine + adenosine 3',5'-bisphosphate + H(+). The protein operates within lipid metabolism; sphingolipid metabolism. Functionally, catalyzes the transfer of a sulfate group to position 3 of non-reducing beta-galactosyl residues in glycerolipids and sphingolipids, therefore participates in the biosynthesis of sulfoglycolipids. Catalyzes the synthesis of galactosylceramide sulfate (sulfatide), a major lipid component of the myelin sheath and of monogalactosylalkylacylglycerol sulfate (seminolipid), present in spermatocytes. Seems to prefer beta-glycosides at the non-reducing termini of sugar chains attached to a lipid moiety. Also acts on lactosylceramide, galactosyl 1-alkyl-2-sn-glycerol and galactosyl diacylglycerol (in vitro). The sequence is that of Galactosylceramide sulfotransferase from Mus musculus (Mouse).